The primary structure comprises 325 residues: NADH-quinone oxidoreductase subunit H (325 aa).

8 consecutive transmembrane segments (helical) span residues 5 to 25 (LIII…AAAY), 75 to 95 (FVYW…FVLI), 117 to 137 (VGVV…VLAG), 157 to 177 (ISYE…TGTL), 190 to 210 (WLIW…FAET), 240 to 260 (FFLG…TLFF), 268 to 288 (DIPI…FMWV), and 305 to 325 (WKVL…FTLV).

The protein belongs to the complex I subunit 1 family. As to quaternary structure, NDH-1 is composed of 14 different subunits. Subunits NuoA, H, J, K, L, M, N constitute the membrane sector of the complex.

The protein resides in the cell inner membrane. It catalyses the reaction a quinone + NADH + 5 H(+)(in) = a quinol + NAD(+) + 4 H(+)(out). NDH-1 shuttles electrons from NADH, via FMN and iron-sulfur (Fe-S) centers, to quinones in the respiratory chain. The immediate electron acceptor for the enzyme in this species is believed to be ubiquinone. Couples the redox reaction to proton translocation (for every two electrons transferred, four hydrogen ions are translocated across the cytoplasmic membrane), and thus conserves the redox energy in a proton gradient. This subunit may bind ubiquinone. The chain is NADH-quinone oxidoreductase subunit H from Protochlamydia amoebophila (strain UWE25).